Reading from the N-terminus, the 221-residue chain is Ribosomal RNA small subunit methyltransferase Nep1 (221 aa).

S-adenosyl-L-methionine is bound by residues Gly-174, Gly-179, and 196–201; that span reads VGDEPL.

It belongs to the class IV-like SAM-binding methyltransferase superfamily. RNA methyltransferase NEP1 family. In terms of assembly, homodimer.

It catalyses the reaction a pseudouridine in rRNA + S-adenosyl-L-methionine = an N(1)-methylpseudouridine in rRNA + S-adenosyl-L-homocysteine + H(+). Methyltransferase involved in ribosomal biogenesis. Specifically catalyzes the N1-methylation of the pseudouridine corresponding to position 914 in M.jannaschii 16S rRNA. The sequence is that of Ribosomal RNA small subunit methyltransferase Nep1 from Pyrobaculum neutrophilum (strain DSM 2338 / JCM 9278 / NBRC 100436 / V24Sta) (Thermoproteus neutrophilus).